Consider the following 336-residue polypeptide: 7,8-didemethyl-8-hydroxy-5-deazariboflavin synthase (336 aa).

In terms of domain architecture, Radical SAM core spans 18 to 249 (ITYSPAYTLV…TSIAIQVPPN (232 aa)). [4Fe-4S] cluster-binding residues include Cys-32, Cys-36, and Cys-39.

It belongs to the radical SAM superfamily. CofG family. In terms of assembly, consists of two subunits, CofG and CofH. [4Fe-4S] cluster serves as cofactor.

It carries out the reaction 5-amino-5-(4-hydroxybenzyl)-6-(D-ribitylimino)-5,6-dihydrouracil + S-adenosyl-L-methionine = 7,8-didemethyl-8-hydroxy-5-deazariboflavin + 5'-deoxyadenosine + L-methionine + NH4(+) + H(+). It functions in the pathway cofactor biosynthesis; coenzyme F0 biosynthesis. Catalyzes the radical-mediated synthesis of 7,8-didemethyl-8-hydroxy-5-deazariboflavin from 5-amino-5-(4-hydroxybenzyl)-6-(D-ribitylimino)-5,6-dihydrouracil. This chain is 7,8-didemethyl-8-hydroxy-5-deazariboflavin synthase, found in Synechococcus elongatus (strain ATCC 33912 / PCC 7942 / FACHB-805) (Anacystis nidulans R2).